The chain runs to 252 residues: Chitooligosaccharide deacetylase (252 aa).

Residues His61 and His125 each coordinate Mg(2+).

It belongs to the YdjC deacetylase family. ChbG subfamily. As to quaternary structure, homodimer. Mg(2+) serves as cofactor.

The protein resides in the cytoplasm. It carries out the reaction N,N'-diacetylchitobiose + H2O = N-acetyl-beta-D-glucosaminyl-(1-&gt;4)-D-glucosamine + acetate. The enzyme catalyses diacetylchitobiose-6'-phosphate + H2O = N'-monoacetylchitobiose-6'-phosphate + acetate. It participates in glycan degradation; chitin degradation. Involved in the degradation of chitin. ChbG is essential for growth on the acetylated chitooligosaccharides chitobiose and chitotriose but is dispensable for growth on cellobiose and chitosan dimer, the deacetylated form of chitobiose. Deacetylation of chitobiose-6-P and chitotriose-6-P is necessary for both the activation of the chb promoter by the regulatory protein ChbR and the hydrolysis of phosphorylated beta-glucosides by the phospho-beta-glucosidase ChbF. Catalyzes the removal of only one acetyl group from chitobiose-6-P to yield monoacetylchitobiose-6-P, the inducer of ChbR and the substrate of ChbF. The polypeptide is Chitooligosaccharide deacetylase (Citrobacter koseri (strain ATCC BAA-895 / CDC 4225-83 / SGSC4696)).